A 494-amino-acid polypeptide reads, in one-letter code: Serine/arginine-rich splicing factor 4 (494 aa).

The RRM 1 domain maps to 2 to 72 (PRVYIGRLSY…ERVIVEHARG (71 aa)). 2 disordered regions span residues 72 to 95 (GPRR…GRDK) and 169 to 494 (KIRL…HSRS). Phosphoserine occurs at positions 78 and 84. The region spanning 104 to 177 (YRLIVENLSS…RKIRLVEDKP (74 aa)) is the RRM 2 domain. Basic residues-rich tracts occupy residues 179-206 (SRRR…KSRS) and 214-246 (SHSK…KKEK). Basic and acidic residues predominate over residues 247-256 (SRSPSKEKSR). Residues 257 to 267 (SRSHSAGKSRS) show a composition bias toward basic residues. A compositionally biased stretch (basic and acidic residues) spans 268–278 (KSKDQAEEKIQ). Residues 286 to 302 (PKSRSPSRHKSKSKSRS) are compositionally biased toward basic residues. A phosphoserine mark is found at Ser288, Ser290, and Ser292. The segment covering 303 to 327 (RSQERRVEEEKRGSVSRGRSQEKSL) has biased composition (basic and acidic residues). Composition is skewed to basic residues over residues 328-359 (RQSR…GRKR) and 367-382 (RSRS…KRGS). The segment covering 411 to 431 (VSKEREHAKSESSQREGRGES) has biased composition (basic and acidic residues). Residues Ser431, Ser446, Ser456, Ser458, and Ser460 each carry the phosphoserine modification. Over residues 449–460 (KSKPNLPSESRS) the composition is skewed to low complexity. Residues 461–494 (RSKSASKTRSRSKSRSRSASRSPSRSRSRSHSRS) are compositionally biased toward basic residues.

Belongs to the splicing factor SR family. Found in a pre-mRNA splicing complex with SRSF4/SFRS4, SRSF5/SFRS5, SNRNP70, SNRPA1, SRRM1 and SRRM2. Interacts with PNN. In terms of processing, extensively phosphorylated on serine residues in the RS domain.

The protein resides in the nucleus speckle. Functionally, plays a role in alternative splice site selection during pre-mRNA splicing. Represses the splicing of MAPT/Tau exon 10. The polypeptide is Serine/arginine-rich splicing factor 4 (SRSF4) (Homo sapiens (Human)).